We begin with the raw amino-acid sequence, 409 residues long: MDRISGLPDEVLVKILSFVPTKVAVSTSILSKRWEFLWMWLTKLKFGSKRYSESEFKRLQCFLDRNLPLHRAPVIESFRLVLSDSHFKPEDIRMWVVVAVSRYIRELKIYSSHYGEKQNILPSSLYTCKSLVILKLDGGVLLDVPRMVCLPSLKTLELKGVRYFKQGSLQRLLCNCPVLEDLVVNLSHHDNMGKLTVIVPSLQRLSLSTPSSREFVIDTPSLLSFQLVDRNDNSHTFLIENMPKLREAYINVPFADIKSLIGSITSVKRLAISSEVGYGEGFIFNHLEELTLWNKYSSNLLVWFLKNSPNLRELMLVSETDDHENLGMLSWNQPSIVPECMLSSLQKFTWFKYLGRPQDRDIAVYILKNACRLRTATIKSDTRLFTKLEMITELRLSSQASSTCELNFS.

The region spanning 1–47 is the F-box domain; that stretch reads MDRISGLPDEVLVKILSFVPTKVAVSTSILSKRWEFLWMWLTKLKFG. The FBD domain occupies 330-379; that stretch reads SWNQPSIVPECMLSSLQKFTWFKYLGRPQDRDIAVYILKNACRLRTATIK.

This chain is FBD-associated F-box protein At4g10400, found in Arabidopsis thaliana (Mouse-ear cress).